The following is a 342-amino-acid chain: Transcription initiation factor TFIID subunit 12 (342 aa).

The tract at residues 1 to 221 (MKMEEFSPPT…QAPPPQMIPA (221 aa)) is disordered. Polar residues predominate over residues 12–35 (PNNHVIVQANPQIAAALSTNSPMQ). Low complexity-rich tracts occupy residues 39 to 59 (PPQGHQNPNEQQQQQQFVGQP), 67 to 89 (PMRMQMPQQQIRQMPYPSPQMRA), 96 to 146 (QQQQ…HLMG), and 180 to 192 (QQIMQVQHQQQHQ). Positions 193–218 (QPPPSQQIQQPPIPQPQQQQAPPPQM) are enriched in pro residues. In terms of domain architecture, Histone-fold spans 230–297 (EKSKLDDLMQ…EFILKNVYNM (68 aa)).

Belongs to the TAF12 family. In terms of assembly, interacts (via histone-fold domain) with taf-4 (via the histone-fold domain). Interaction may facilitate the nuclear localization of taf-4.

The protein resides in the nucleus. Its function is as follows. Part of the general transcription factor complex TFIID. Plays a role in recruiting taf-4 to the nucleus and thereby activating transcription initiation by RNA polymerase II, as part of the TFIID complex. This Caenorhabditis elegans protein is Transcription initiation factor TFIID subunit 12.